The following is a 383-amino-acid chain: MAASEIMNNLPMHSLDSSLRDLLNDDLFIESDESTKSVNDQRSEVFQECVNLFIKRDIKDCLEKMSEVGFIDITVFKSNPMILDLFVSACDIMPSFTKLGLTLQSEILNIFTLDTPQCIETRKIILGDLSKLLVINKFFRCCIKVIQFNLTDHTEQEEKTLELESIMSDFIFVYITKMRTTIDVVGLQELIEIFIFQVKVKLHHKKPSPNMYWALCKTLPKLSPTLKGLYLSKDVSIEDAILNSIDNKIQKDKAKSKGKQRGVKQKIHHFHEPMLHNSSEEQVKVEDAFNQRTSTDSRLQSTGTAPRKKNNDITVLAGSFWAVLKHHFTRSVLNKNGLLLTGLLLLLCLKKYKSLMAIFKHVPAAFHTVYPQIVGLLKLLASI.

Residues 1-331 (MAASEIMNNL…AVLKHHFTRS (331 aa)) lie on the Cytoplasmic side of the membrane. A helical transmembrane segment spans residues 332 to 349 (VLNKNGLLLTGLLLLLCL). At 350–383 (KKYKSLMAIFKHVPAAFHTVYPQIVGLLKLLASI) the chain is on the lumenal side.

Interacts with PEX6. Interacts with PEX19; targets PEX15 to the peroxisome. Phosphorylated.

It is found in the peroxisome membrane. Its subcellular location is the endoplasmic reticulum membrane. Peroxisomal docking factor that anchors PEX1 and PEX6 to peroxisome membranes. PEX26 is therefore required for the formation of the PEX1-PEX6 AAA ATPase complex, a complex that mediates the extraction of the PEX5 receptor from peroxisomal membrane. This is Peroxisomal membrane protein PEX15 (PEX15) from Saccharomyces cerevisiae (strain ATCC 204508 / S288c) (Baker's yeast).